The sequence spans 329 residues: tRNA(Ile)-lysidine synthase, chloroplastic (329 aa).

An ATP-binding site is contributed by 32–37 (SGGQDS).

This sequence belongs to the tRNA(Ile)-lysidine synthase family.

The protein resides in the plastid. Its subcellular location is the chloroplast. It catalyses the reaction cytidine(34) in tRNA(Ile2) + L-lysine + ATP = lysidine(34) in tRNA(Ile2) + AMP + diphosphate + H(+). In terms of biological role, ligates lysine onto the cytidine present at position 34 of the AUA codon-specific tRNA(Ile) that contains the anticodon CAU, in an ATP-dependent manner. Cytidine is converted to lysidine, thus changing the amino acid specificity of the tRNA from methionine to isoleucine. In Pyropia yezoensis (Susabi-nori), this protein is tRNA(Ile)-lysidine synthase, chloroplastic.